We begin with the raw amino-acid sequence, 446 residues long: Probable E3 ubiquitin-protein ligase XBOS31 (446 aa).

ANK repeat units lie at residues 46 to 75, 79 to 108, 113 to 142, 160 to 189, and 197 to 227; these read DRFT…DVDV, KKQT…NVLT, RART…QAQG, RGAT…IVSA, and PGST…RLQR. The segment at 317 to 366 adopts an RING-type zinc-finger fold; the sequence is CNICFEQACSMEVKECGHQMCAACTLAICCHSKPNPKTLLLHPPACPFCR. The interval 376–401 is disordered; it reads TTNSNKTNSRRRSRSRSSSFKGGLSS.

The catalysed reaction is S-ubiquitinyl-[E2 ubiquitin-conjugating enzyme]-L-cysteine + [acceptor protein]-L-lysine = [E2 ubiquitin-conjugating enzyme]-L-cysteine + N(6)-ubiquitinyl-[acceptor protein]-L-lysine.. It participates in protein modification; protein ubiquitination. In Oryza sativa subsp. japonica (Rice), this protein is Probable E3 ubiquitin-protein ligase XBOS31 (XBOS31).